The sequence spans 719 residues: DNA polymerase epsilon subunit B (719 aa).

A disordered region spans residues 107–147 (SIPPKTKTYNNGGGKTTTIDRFLTKRPSPSDNDEGPLDQSI).

It belongs to the DNA polymerase epsilon subunit B family. As to quaternary structure, heterotetramer. Consists of four subunits: POL2, DPB2, DPB3 and DPB4.

It is found in the nucleus. Its function is as follows. As accessory component of the DNA polymerase epsilon (DNA polymerase II) participates in chromosomal DNA replication. The polypeptide is DNA polymerase epsilon subunit B (DPB2) (Candida glabrata (strain ATCC 2001 / BCRC 20586 / JCM 3761 / NBRC 0622 / NRRL Y-65 / CBS 138) (Yeast)).